The sequence spans 379 residues: Glutamate 5-kinase (379 aa).

Lys19 contacts ATP. Residues Ser59, Asp146, and Asn158 each contribute to the substrate site. ATP is bound by residues 178-179 and 220-226; these read TD and TGGMATK. The 79-residue stretch at 285-363 folds into the PUA domain; it reads SGDIIIDDGA…KDIISILGHD (79 aa).

Belongs to the glutamate 5-kinase family.

Its subcellular location is the cytoplasm. The catalysed reaction is L-glutamate + ATP = L-glutamyl 5-phosphate + ADP. It functions in the pathway amino-acid biosynthesis; L-proline biosynthesis; L-glutamate 5-semialdehyde from L-glutamate: step 1/2. In terms of biological role, catalyzes the transfer of a phosphate group to glutamate to form L-glutamate 5-phosphate. The polypeptide is Glutamate 5-kinase (Vibrio campbellii (strain ATCC BAA-1116)).